A 429-amino-acid chain; its full sequence is Glutamate-1-semialdehyde 2,1-aminomutase 1 (429 aa).

Lys267 carries the N6-(pyridoxal phosphate)lysine modification.

Belongs to the class-III pyridoxal-phosphate-dependent aminotransferase family. HemL subfamily. As to quaternary structure, homodimer. Requires pyridoxal 5'-phosphate as cofactor.

Its subcellular location is the cytoplasm. The catalysed reaction is (S)-4-amino-5-oxopentanoate = 5-aminolevulinate. It participates in porphyrin-containing compound metabolism; protoporphyrin-IX biosynthesis; 5-aminolevulinate from L-glutamyl-tRNA(Glu): step 2/2. This Staphylococcus carnosus (strain TM300) protein is Glutamate-1-semialdehyde 2,1-aminomutase 1.